Here is a 929-residue protein sequence, read N- to C-terminus: Lon protease homolog 2, peroxisomal (929 aa).

Residues 11–257 enclose the Lon N-terminal domain; the sequence is LPLVPLPKGS…RVVEILTRQL (247 aa). The interval 302–325 is disordered; sequence GLTPPGLSAGRNNDNDDKESNEVD. ATP is bound at residue 484–491; the sequence is GPPGVGKT. The 188-residue stretch at 727 to 914 folds into the Lon proteolytic domain; sequence HGRPGVVTGL…WEAIRQVWPD (188 aa). Active-site residues include Ser820 and Lys863. Residues 927 to 929 carry the Microbody targeting signal motif; it reads SRL.

It belongs to the peptidase S16 family.

It localises to the peroxisome matrix. It catalyses the reaction Hydrolysis of proteins in presence of ATP.. Its function is as follows. ATP-dependent serine protease that mediates the selective degradation of misfolded and unassembled polypeptides in the peroxisomal matrix. Necessary for type 2 peroxisome targeting signal (PTS2)-containing protein processing and facilitates peroxisome matrix protein import. This is Lon protease homolog 2, peroxisomal from Aspergillus niger (strain ATCC MYA-4892 / CBS 513.88 / FGSC A1513).